The chain runs to 1507 residues: Histone-lysine N-methyltransferase set-2 (1507 aa).

The segment at 1 to 32 (MSTHDMNHHPPRKSHSKRDKPSSSNSGPKIEN) is disordered. Positions 9-18 (HPPRKSHSKR) are enriched in basic residues. One can recognise an RRM domain in the interval 128–199 (VSLFNMDDNC…QNLLATKCTP (72 aa)). 5 disordered regions span residues 280–578 (DYTM…QPQM), 650–697 (EPFS…EEPA), 803–826 (DEEKRKKEREEKARQEAEKPSNHL), 842–1058 (SSRG…GPII), and 1163–1199 (QKPRKQVFEKDPYEYYEPPPTKRPAPPPRFKKTFKPR). Residues 296–315 (PIPPPPIKEESPPPPPPPPV) show a composition bias toward pro residues. A compositionally biased stretch (low complexity) spans 316-327 (ASVSNLAPVPSV). The segment covering 331 to 342 (YYNNIQPSSSTM) has biased composition (polar residues). Basic and acidic residues predominate over residues 413-444 (VKYETYKMEKRKIKYEGGNKKYEQVHIKERTA). Low complexity predominate over residues 456 to 465 (SSESASGSSS). Basic residues predominate over residues 478-488 (KKKKRPKSPNR). A compositionally biased stretch (polar residues) spans 566–575 (HLQTPYQHVQ). Composition is skewed to basic and acidic residues over residues 668-680 (DVGRAESPEKPSL) and 803-823 (DEEKRKKEREEKARQEAEKPS). The span at 846–868 (FYRKQKPIPKSHPKHQEHHHHAK) shows a compositional bias: basic residues. Residues 869–908 (ASVSTPVHSSSTSRNSSVAPTPQRTVSTSSSSSSAATSAR) are compositionally biased toward low complexity. Positions 941-951 (SFSSTSIQSSP) are enriched in polar residues. Positions 958–971 (SSSSRTSSSSSTSS) are enriched in low complexity. Residues 973 to 982 (KQEETADEKS) are compositionally biased toward basic and acidic residues. Over residues 990–1007 (SSDESSTTGSTATSVVSS) the composition is skewed to low complexity. The segment covering 1015-1047 (QQEKTDGEPPKKKSQTDFISERVSKIEGEERPL) has biased composition (basic and acidic residues). Residues 1179–1190 (EPPPTKRPAPPP) are compositionally biased toward pro residues. Positions 1340–1345 (RLLQRR) match the RxxxRR motif motif. Residues 1368-1485 (KMIKFARSRI…KGEEITYDYK (118 aa)) form the SET domain. Tyr1484 contacts S-adenosyl-L-methionine. Residues 1491 to 1507 (DKIDCLCGAKTCRGYLN) enclose the Post-SET domain.

The protein belongs to the class V-like SAM-binding methyltransferase superfamily. As to quaternary structure, component of the Set1C/COMPASS complex (also known as the SET2 complex), which contains at least set-2, swd-2.1, cfp-1, rbbp-5, wdr-5.1, dpy-30 and ash-2. In terms of tissue distribution, expressed in all cells of embryo. In L1 larva, it is predominantly expressed in Z2 and Z3 primordial germ cells. In adults, it is predominantly expressed in the germline.

It is found in the nucleus. It catalyses the reaction L-lysyl(4)-[histone H3] + 3 S-adenosyl-L-methionine = N(6),N(6),N(6)-trimethyl-L-lysyl(4)-[histone H3] + 3 S-adenosyl-L-homocysteine + 3 H(+). It carries out the reaction N(6)-methyl-L-lysyl(4)-[histone H3] + S-adenosyl-L-methionine = N(6),N(6)-dimethyl-L-lysyl(4)-[histone H3] + S-adenosyl-L-homocysteine + H(+). The enzyme catalyses N(6),N(6)-dimethyl-L-lysyl(4)-[histone H3] + S-adenosyl-L-methionine = N(6),N(6),N(6)-trimethyl-L-lysyl(4)-[histone H3] + S-adenosyl-L-homocysteine + H(+). Catalytic component of the COMPASS (Set1C) complex that specifically mono-, di- and trimethylates histone H3 to form H3K4me1/2/3. Binds RNAs which might negatively affect its histone methyltransferase activity. COMPASS recognizes ubiquitinated H2B on one face of the nucleosome which stimulates the methylation of H3 on the opposing face. H3 'Lys-4' methylation represents a specific tag for epigenetic transcriptional activation. Implicated in the epigenetic inheritance of lifespan over several generations. Acts in the germline to limit the longevity of the soma, probably by regulating a lipid metabolism pathway that signals from the germline to the intestine, thereby preventing accumulation of mono-unsaturated fatty acids. Methylation in the germline is required for germline development and fertility, possibly by ensuring genome stability. May act redundantly with mes-3 and mes-4 proteins in the development of a fertile germline. Required for RNAi. Functions as an antagonist of hpl-1 and hpl-2 activity in growth and somatic gonad development. Cooperates with jmjd-3.1 and egl-27 to ensure robust transdifferentiation of the Y rectal cell to the PDA motor neuron during larval development. The polypeptide is Histone-lysine N-methyltransferase set-2 (set-2) (Caenorhabditis elegans).